The following is a 1028-amino-acid chain: Carbamoyl phosphate synthase large chain (1028 aa).

The tract at residues 1 to 409 (MPPRRDLKKI…ALMKALRGLE (409 aa)) is carboxyphosphate synthetic domain. Arg-129, Arg-169, Gly-175, Gly-176, Glu-208, Val-210, Glu-215, Gly-241, Val-242, His-243, Gln-285, and Glu-299 together coordinate ATP. One can recognise an ATP-grasp 1 domain in the interval 133–328 (QEAMRRIDLE…IAKIAALLAV (196 aa)). Mg(2+) contacts are provided by Gln-285, Glu-299, and Asn-301. 3 residues coordinate Mn(2+): Gln-285, Glu-299, and Asn-301. Residues 410 to 549 (RDVRALAGVR…YSTYELEDEV (140 aa)) form an oligomerization domain region. The tract at residues 550 to 933 (WPSQKPKVVI…AYYKAELGAG (384 aa)) is carbamoyl phosphate synthetic domain. The ATP-grasp 2 domain occupies 674 to 866 (HALCQRLGIP…LAKLAALIAV (193 aa)). 10 residues coordinate ATP: Arg-710, Arg-750, Leu-752, Glu-757, Gly-782, Val-783, His-784, Ser-785, Gln-825, and Glu-837. The Mg(2+) site is built by Gln-825, Glu-837, and Asn-839. Mn(2+) contacts are provided by Gln-825, Glu-837, and Asn-839. Residues 934–1028 (QRLPLSGQVR…QDWHQKAPRG (95 aa)) enclose the MGS-like domain. The tract at residues 934–1028 (QRLPLSGQVR…QDWHQKAPRG (95 aa)) is allosteric domain.

It belongs to the CarB family. Composed of two chains; the small (or glutamine) chain promotes the hydrolysis of glutamine to ammonia, which is used by the large (or ammonia) chain to synthesize carbamoyl phosphate. Tetramer of heterodimers (alpha,beta)4. Mg(2+) is required as a cofactor. It depends on Mn(2+) as a cofactor.

The catalysed reaction is hydrogencarbonate + L-glutamine + 2 ATP + H2O = carbamoyl phosphate + L-glutamate + 2 ADP + phosphate + 2 H(+). It carries out the reaction hydrogencarbonate + NH4(+) + 2 ATP = carbamoyl phosphate + 2 ADP + phosphate + 2 H(+). The protein operates within amino-acid biosynthesis; L-arginine biosynthesis; carbamoyl phosphate from bicarbonate: step 1/1. It functions in the pathway pyrimidine metabolism; UMP biosynthesis via de novo pathway; (S)-dihydroorotate from bicarbonate: step 1/3. In terms of biological role, large subunit of the glutamine-dependent carbamoyl phosphate synthetase (CPSase). CPSase catalyzes the formation of carbamoyl phosphate from the ammonia moiety of glutamine, carbonate, and phosphate donated by ATP, constituting the first step of 2 biosynthetic pathways, one leading to arginine and/or urea and the other to pyrimidine nucleotides. The large subunit (synthetase) binds the substrates ammonia (free or transferred from glutamine from the small subunit), hydrogencarbonate and ATP and carries out an ATP-coupled ligase reaction, activating hydrogencarbonate by forming carboxy phosphate which reacts with ammonia to form carbamoyl phosphate. The polypeptide is Carbamoyl phosphate synthase large chain (Thermus thermophilus (strain ATCC BAA-163 / DSM 7039 / HB27)).